A 168-amino-acid polypeptide reads, in one-letter code: NADH-quinone oxidoreductase subunit B (168 aa).

Residues Cys-37, Cys-38, Cys-103, and Cys-132 each contribute to the [4Fe-4S] cluster site.

This sequence belongs to the complex I 20 kDa subunit family. In terms of assembly, NDH-1 is composed of 14 different subunits. Subunits NuoB, C, D, E, F, and G constitute the peripheral sector of the complex. [4Fe-4S] cluster serves as cofactor.

It is found in the cell inner membrane. It catalyses the reaction a quinone + NADH + 5 H(+)(in) = a quinol + NAD(+) + 4 H(+)(out). NDH-1 shuttles electrons from NADH, via FMN and iron-sulfur (Fe-S) centers, to quinones in the respiratory chain. The immediate electron acceptor for the enzyme in this species is believed to be ubiquinone. Couples the redox reaction to proton translocation (for every two electrons transferred, four hydrogen ions are translocated across the cytoplasmic membrane), and thus conserves the redox energy in a proton gradient. The polypeptide is NADH-quinone oxidoreductase subunit B (Campylobacter fetus subsp. fetus (strain 82-40)).